Reading from the N-terminus, the 123-residue chain is WAP four-disulfide core domain protein 5 (123 aa).

The first 24 residues, 1-24, serve as a signal peptide directing secretion; it reads MRFGRLLLLAVLLAGVSQLPAVSG. 2 consecutive WAP domains span residues 27–74 and 75–121; these read KGEK…IPRV and SVKL…RDPV. Disulfide bonds link cysteine 34/cysteine 62, cysteine 41/cysteine 66, cysteine 49/cysteine 61, cysteine 55/cysteine 70, cysteine 81/cysteine 109, cysteine 88/cysteine 113, cysteine 96/cysteine 108, and cysteine 102/cysteine 117.

The protein localises to the secreted. Putative acid-stable proteinase inhibitor. The sequence is that of WAP four-disulfide core domain protein 5 (WFDC5) from Otolemur garnettii (Small-eared galago).